A 599-amino-acid chain; its full sequence is Putative sensor histidine kinase NtrY-like (599 aa).

4 helical membrane-spanning segments follow: residues 17–37 (ILIL…FYVI), 44–64 (FSTI…LGIL), 85–105 (IVIA…VFSV), and 285–305 (IMFI…GVLF). One can recognise an HAMP domain in the interval 307 to 361 (AKIVKPIKKLVTATDKVKDGDLTVQVPENEVDKDEIGTLYAAFNRMIKQLSRQQR). Positions 378 to 589 (KVAHEIKNPL…IIDIKFDLKE (212 aa)) constitute a Histidine kinase domain. His-381 is subject to Phosphohistidine; by autocatalysis.

Its subcellular location is the cell membrane. It catalyses the reaction ATP + protein L-histidine = ADP + protein N-phospho-L-histidine.. Member of the two-component regulatory system RP614/RP562. The polypeptide is Putative sensor histidine kinase NtrY-like (Rickettsia prowazekii (strain Madrid E)).